Reading from the N-terminus, the 338-residue chain is DNA-directed RNA polymerase I subunit RPA43 (338 aa).

The tract at residues 209–338 (EVSEEVTENG…PKRKGKSNFL (130 aa)) is disordered. A phosphoserine mark is found at S242, S304, and S316. Phosphothreonine is present on T322. S328 is subject to Phosphoserine. A compositionally biased stretch (basic residues) spans 328–338 (SPKRKGKSNFL).

The protein belongs to the eukaryotic RPA43 RNA polymerase subunit family. In terms of assembly, component of the RNA polymerase I (Pol I) complex consisting of 13 subunits: a ten-subunit catalytic core composed of POLR1A/RPA1, POLR1B/RPA2, POLR1C/RPAC1, POLR1D/RPAC2, POLR1H/RPA12, POLR2E/RPABC1, POLR2F/RPABC2, POLR2H/RPABC3, POLR2K/RPABC4 and POLR2L/RPABC5; a mobile stalk subunit POLR1F/RPA43 protruding from the core and additional subunits homologous to general transcription factors POLR1E/RPA49 and POLR1G/RPA34. Interacts with RRN3/TIF-IA. As to expression, widely expressed. Expressed in all fetal and adult tissues tested, with highest expression in fetal lung, liver, and kidney, and low expression in all adult tissues.

It localises to the nucleus. The protein localises to the nucleolus. In terms of biological role, component of RNA polymerase I (Pol I), a DNA-dependent RNA polymerase which synthesizes ribosomal RNA precursors using the four ribonucleoside triphosphates as substrates. Through its association with RRN3/TIF-IA may be involved in recruitment of Pol I to rDNA promoters. This Homo sapiens (Human) protein is DNA-directed RNA polymerase I subunit RPA43.